The following is a 1590-amino-acid chain: von Willebrand factor D and EGF domain-containing protein (1590 aa).

A signal peptide spans 1–20; it reads MPGGACVLVIALMFLAWGEA. A glycan (N-linked (GlcNAc...) asparagine) is linked at asparagine 367. Residues 423-606 enclose the VWFD domain; that stretch reads AYCYTFTDPH…EWRILPGKSM (184 aa). 2 disulfide bridges follow: cysteine 425/cysteine 565 and cysteine 468/cysteine 477. Asparagine 703 and asparagine 968 each carry an N-linked (GlcNAc...) asparagine glycan. The EGF-like 1 domain maps to 1177–1216; it reads TVKSCDCLNGGSCVSDRNFSPGSGVYLCVCLPGFHGSLCE. 3 disulfide bridges follow: cysteine 1181–cysteine 1189, cysteine 1183–cysteine 1204, and cysteine 1206–cysteine 1215. Positions 1268–1280 are enriched in basic and acidic residues; sequence DKSVNKEEDDKNA. A disordered region spans residues 1268–1288; that stretch reads DKSVNKEEDDKNAQGRKRHVK. EGF-like domains are found at residues 1294-1326, 1358-1390, 1422-1454, 1455-1486, 1518-1550, and 1551-1582; these read AFTI…SNCQ, DEEH…PRCE, STAL…EHCQ, NAFC…RRFQ, NTPI…VRCQ, and IPIC…VKCE. Cystine bridges form between cysteine 1298–cysteine 1308, cysteine 1302–cysteine 1314, cysteine 1316–cysteine 1325, cysteine 1362–cysteine 1372, cysteine 1366–cysteine 1378, cysteine 1380–cysteine 1389, cysteine 1426–cysteine 1436, cysteine 1430–cysteine 1442, cysteine 1444–cysteine 1453, cysteine 1458–cysteine 1468, cysteine 1462–cysteine 1474, cysteine 1522–cysteine 1532, cysteine 1526–cysteine 1538, cysteine 1540–cysteine 1549, cysteine 1554–cysteine 1564, cysteine 1558–cysteine 1570, and cysteine 1572–cysteine 1581.

The protein localises to the secreted. This Homo sapiens (Human) protein is von Willebrand factor D and EGF domain-containing protein (VWDE).